The following is a 341-amino-acid chain: HTH-type transcriptional repressor PurR (341 aa).

The HTH lacI-type domain maps to 2–56 (ATIKDVAKHAGVSTTTVSHVINKTRFVAENTKAAVWAAIKELHYSPSAVARSLKV). A DNA-binding region (H-T-H motif) is located at residues 4–23 (IKDVAKHAGVSTTTVSHVIN). A DNA-binding region spans residues 48–56 (SAVARSLKV). Hypoxanthine contacts are provided by Y73, R190, T192, and D275.

Homodimer.

It functions in the pathway purine metabolism; purine nucleotide biosynthesis [regulation]. Its function is as follows. Is the main repressor of the genes involved in the de novo synthesis of purine nucleotides, regulating purB, purC, purEK, purF, purHD, purL, purMN and guaBA expression. PurR is allosterically activated to bind its cognate DNA by binding the purine corepressors, hypoxanthine or guanine, thereby effecting transcription repression. In Yersinia pestis bv. Antiqua (strain Antiqua), this protein is HTH-type transcriptional repressor PurR.